Reading from the N-terminus, the 776-residue chain is Lysyl oxidase homolog 2 (776 aa).

A signal peptide spans 1 to 25 (MELHFGSCLSGCLALLVLLPSLSLA). SRCR domains follow at residues 61–162 (VRLA…VVCS), 191–305 (IRPI…VSCV), 329–428 (VRLR…VRCN), and 438–546 (VRLN…VACS). 9 cysteine pairs are disulfide-bonded: Cys-87–Cys-151, Cys-100–Cys-161, Cys-131–Cys-141, Cys-221–Cys-294, Cys-234–Cys-304, Cys-268–Cys-278, Cys-354–Cys-417, Cys-367–Cys-427, and Cys-398–Cys-408. An N-linked (GlcNAc...) asparagine glycan is attached at Asn-267. The N-linked (GlcNAc...) asparagine glycan is linked to Asn-291. The N-linked (GlcNAc...) asparagine glycan is linked to Asn-458. Intrachain disulfides connect Cys-467/Cys-532, Cys-480/Cys-545, and Cys-514/Cys-524. The tract at residues 550 to 753 (PDLVLNAEIV…WMYNCHVGGA (204 aa)) is lysyl-oxidase like. 2 residues coordinate Ca(2+): Asp-551 and Leu-552. Intrachain disulfides connect Cys-575–Cys-627, Cys-581–Cys-697, Cys-659–Cys-675, and Cys-665–Cys-687. His-628, His-630, and His-632 together coordinate Cu cation. N-linked (GlcNAc...) asparagine glycosylation occurs at Asn-646. The segment at residues 655-691 (KASFCLEDTECEGDIQKSYECANFGEQGITMGCWDMY) is a cross-link (lysine tyrosylquinone (Lys-Tyr)). Tyr-691 bears the 2',4',5'-topaquinone mark. Ca(2+) is bound by residues Glu-724, Asp-726, Asn-729, and Asn-730. Residues Cys-734 and Cys-748 are joined by a disulfide bond.

Belongs to the lysyl oxidase family. In terms of assembly, component of some chromatin repressor complex. Interacts with SNAI1. Interacts with TAF10. Interacts with HSPA5. Interacts with EFEMP2. Cu cation is required as a cofactor. The cofactor is lysine tyrosylquinone residue. In terms of processing, the lysine tyrosylquinone cross-link (LTQ) is generated by condensation of the epsilon-amino group of a lysine with a topaquinone produced by oxidation of tyrosine. Post-translationally, N-glycosylated. N-glycosylation on Asn-458 and Asn-646 may be essential for proper folding and secretion; may be composed of a fucosylated carbohydrates attached to a trimannose N-linked glycan core. In terms of tissue distribution, ubiquitous. Highest expression in skin, lung and thymus. Present in chondrocytes: mainly expressed by chondrocytes in healing fractures and in epiphyseal growth plates (at protein level).

It is found in the secreted. The protein localises to the extracellular space. It localises to the extracellular matrix. Its subcellular location is the basement membrane. The protein resides in the nucleus. It is found in the chromosome. The protein localises to the endoplasmic reticulum. It catalyses the reaction L-lysyl-[protein] + O2 + H2O = (S)-2-amino-6-oxohexanoyl-[protein] + H2O2 + NH4(+). Specifically inhibited by a mouse monoclonal antibody AB0023, inhibition occurs in a non-competitive manner. Mediates the post-translational oxidative deamination of lysine residues on target proteins leading to the formation of deaminated lysine (allysine). Acts as a transcription corepressor and specifically mediates deamination of trimethylated 'Lys-4' of histone H3 (H3K4me3), a specific tag for epigenetic transcriptional activation. Shows no activity against histone H3 when it is trimethylated on 'Lys-9' (H3K9me3) or 'Lys-27' (H3K27me3) or when 'Lys-4' is monomethylated (H3K4me1) or dimethylated (H3K4me2). Also mediates deamination of methylated TAF10, a member of the transcription factor IID (TFIID) complex, which induces release of TAF10 from promoters, leading to inhibition of TFIID-dependent transcription. LOXL2-mediated deamination of TAF10 results in transcriptional repression of genes required for embryonic stem cell pluripotency including POU5F1/OCT4, NANOG, KLF4 and SOX2. Involved in epithelial to mesenchymal transition (EMT) via interaction with SNAI1 and participates in repression of E-cadherin, probably by mediating deamination of histone H3. During EMT, involved with SNAI1 in negatively regulating pericentromeric heterochromatin transcription. SNAI1 recruits LOXL2 to pericentromeric regions to oxidize histone H3 and repress transcription which leads to release of heterochromatin component CBX5/HP1A, enabling chromatin reorganization and acquisition of mesenchymal traits. Interacts with the endoplasmic reticulum protein HSPA5 which activates the IRE1-XBP1 pathway of the unfolded protein response, leading to expression of several transcription factors involved in EMT and subsequent EMT induction. When secreted into the extracellular matrix, promotes cross-linking of extracellular matrix proteins by mediating oxidative deamination of peptidyl lysine residues in precursors to fibrous collagen and elastin. Acts as a regulator of sprouting angiogenesis, probably via collagen IV scaffolding. Acts as a regulator of chondrocyte differentiation, probably by regulating expression of factors that control chondrocyte differentiation. In Mus musculus (Mouse), this protein is Lysyl oxidase homolog 2 (Loxl2).